We begin with the raw amino-acid sequence, 302 residues long: Oligopeptide transport system permease protein OppC (302 aa).

At 1–39 (MMLSKKNSETLENFSEKLEVEGRSLWQDARRRFMHNRAA) the chain is on the cytoplasmic side. Residues 40-62 (VASLIVLFLIALFVTVAPMLSQF) traverse the membrane as a helical segment. Topologically, residues 63–102 (TYFDTDWGMMSSAPDMASGHYFGTDSSGRDLLVRVAIGGR) are periplasmic. In terms of domain architecture, ABC transmembrane type-1 spans 101–290 (GRISLMVGIA…VTLFCFNFIG (190 aa)). A helical membrane pass occupies residues 103–125 (ISLMVGIAAALVAVIVGTLYGSL). The Cytoplasmic segment spans residues 126-137 (SGYLGGKIDSVM). The chain crosses the membrane as a helical span at residues 138–160 (MRLLEILNSFPFMFFVILLVTFF). The Periplasmic portion of the chain corresponds to 161–163 (GQN). A helical transmembrane segment spans residues 164-183 (ILLIFVAIGMVSWLDMARIV). The Cytoplasmic portion of the chain corresponds to 184–213 (RGQTLSLKRKEFIEAAQVGGVSTASIVIRH). A helical transmembrane segment spans residues 214 to 236 (IVPNVLGVVVVYASLLVPSMILF). Residues 237-267 (ESFLSFLGLGTQEPLSSWGALLSDGANSMEV) lie on the Periplasmic side of the membrane. A helical transmembrane segment spans residues 268-290 (SPWLLLFPAGFLVVTLFCFNFIG). Residues 291–302 (DGLRDALDPKDR) are Cytoplasmic-facing.

The protein belongs to the binding-protein-dependent transport system permease family. OppBC subfamily. The complex is composed of two ATP-binding proteins (OppD and OppF), two transmembrane proteins (OppB and OppC) and a solute-binding protein (OppA).

The protein localises to the cell inner membrane. Functionally, part of the ABC transporter complex OppABCDF involved in the uptake of oligopeptides, including the cell wall murein tripeptide L-alanyl-gamma-D-glutamyl-meso-diaminopimelate. Responsible for the translocation of the substrate across the membrane. Plays an important nutritional role and is involved in the recycling of cell wall peptides. This Salmonella typhimurium (strain LT2 / SGSC1412 / ATCC 700720) protein is Oligopeptide transport system permease protein OppC.